Consider the following 476-residue polypeptide: Aspartyl/glutamyl-tRNA(Asn/Gln) amidotransferase subunit B (476 aa).

The protein belongs to the GatB/GatE family. GatB subfamily. In terms of assembly, heterotrimer of A, B and C subunits.

It carries out the reaction L-glutamyl-tRNA(Gln) + L-glutamine + ATP + H2O = L-glutaminyl-tRNA(Gln) + L-glutamate + ADP + phosphate + H(+). The enzyme catalyses L-aspartyl-tRNA(Asn) + L-glutamine + ATP + H2O = L-asparaginyl-tRNA(Asn) + L-glutamate + ADP + phosphate + 2 H(+). Its function is as follows. Allows the formation of correctly charged Asn-tRNA(Asn) or Gln-tRNA(Gln) through the transamidation of misacylated Asp-tRNA(Asn) or Glu-tRNA(Gln) in organisms which lack either or both of asparaginyl-tRNA or glutaminyl-tRNA synthetases. The reaction takes place in the presence of glutamine and ATP through an activated phospho-Asp-tRNA(Asn) or phospho-Glu-tRNA(Gln). The chain is Aspartyl/glutamyl-tRNA(Asn/Gln) amidotransferase subunit B from Neisseria gonorrhoeae (strain ATCC 700825 / FA 1090).